The following is a 237-amino-acid chain: Dihydroceramide fatty acyl 2-hydroxylase FAH2 (237 aa).

Transmembrane regions (helical) follow at residues Val54 to Ala74 and Gly77 to Leu97. Zn(2+)-binding residues include His102, His107, His123, His126, and His127. 2 helical membrane passes run Leu134–Leu154 and Leu156–Met176. Residues His181, His185, His201, His204, and His205 each contribute to the Zn(2+) site.

This sequence belongs to the sterol desaturase family. Interacts with CYTB5-A, CYTB5-B, CYTB5-C and CYTB5-D. Zn(2+) serves as cofactor. In terms of tissue distribution, expressed in leaves, roots, flowers and seeds.

Its subcellular location is the endoplasmic reticulum membrane. The catalysed reaction is an N-(1,2-saturated acyl)sphinganine + 2 Fe(II)-[cytochrome b5] + O2 + 2 H(+) = an N-[(2'R)-hydroxyacyl]sphinganine + 2 Fe(III)-[cytochrome b5] + H2O. Functionally, fatty acid 2-hydroxylase involved in the alpha-hydroxylation of the long-chain fatty acid (LCFA) palmitic acid. Probably involved in the resistance response to oxidative stress. The sequence is that of Dihydroceramide fatty acyl 2-hydroxylase FAH2 from Arabidopsis thaliana (Mouse-ear cress).